We begin with the raw amino-acid sequence, 357 residues long: Dynein axonemal assembly factor 10 (357 aa).

4 WD repeats span residues 80–127 (EFTN…IPIW), 132–170 (AHQG…NSAN), 184–223 (EQTN…IQST), and 277–321 (EPNQ…IDKV).

In terms of assembly, interacts with PIH1D1; the interaction associates DNAAF10 with the R2TP complex. Interacts with several dynein axonemal assembly factors.

It localises to the dynein axonemal particle. Its function is as follows. Key assembly factor specifically required for the stability of axonemal dynein heavy chains in cytoplasm. The chain is Dynein axonemal assembly factor 10 (dnaaf10) from Dictyostelium discoideum (Social amoeba).